The chain runs to 140 residues: UPF0102 protein ACIAD1132 (140 aa).

Belongs to the UPF0102 family.

This chain is UPF0102 protein ACIAD1132, found in Acinetobacter baylyi (strain ATCC 33305 / BD413 / ADP1).